The chain runs to 199 residues: MTEKIILASGSPFRKAMLINAGLDVEAVPADVDERALEAPLQDSGVSPEDVALVLAEAKATEVSERRPGALVLGCDQTLSLGDEVFHKPADMEGARRHLLALSGRTHQLNSAAVLVRDGKVLWRHVGIAGMTMRMLDPGFIGRHLALVGAKALASVGAYQIEGEGIQLFEKIEGDYFTIVGLPLLPLLAELRTLGAIDG.

The active-site Proton acceptor is the D76.

This sequence belongs to the Maf family. YceF subfamily. The cofactor is a divalent metal cation.

It localises to the cytoplasm. It catalyses the reaction N(7)-methyl-GTP + H2O = N(7)-methyl-GMP + diphosphate + H(+). Functionally, nucleoside triphosphate pyrophosphatase that hydrolyzes 7-methyl-GTP (m(7)GTP). May have a dual role in cell division arrest and in preventing the incorporation of modified nucleotides into cellular nucleic acids. This is 7-methyl-GTP pyrophosphatase from Mesorhizobium japonicum (strain LMG 29417 / CECT 9101 / MAFF 303099) (Mesorhizobium loti (strain MAFF 303099)).